The primary structure comprises 240 residues: NLKRVTLELGGKSPCIVFADADLDNAVEFAHRGLFFHQGQCCVAASRLFVEESIYDEFVRRSVERAKKYVLGNPLTPGVSQGPQIDKEQYDKIIDLIESGKKEGAKLECGGGPWGNKGYFIQPTVFSNVTDEMRIAKEEIFGPVQQIMKFKSLDEVIKRANNTFYGLAAGVFTKDLDKAVTVSAALQAGTVWVNCYMANSVQCPFGGFKMSGNGRELGEYGLHEYTEVKTVTMKISKKNS.

Residues Glu-8 and Cys-42 contribute to the active site. 4 positions are modified to N6-acetyllysine: Lys-106, Lys-149, Lys-151, and Lys-174.

It belongs to the aldehyde dehydrogenase family. Homotetramer. In terms of tissue distribution, non-lens specific, predominant form expressed in the liver.

Its subcellular location is the cytoplasm. The catalysed reaction is an aldehyde + NAD(+) + H2O = a carboxylate + NADH + 2 H(+). The protein operates within alcohol metabolism; ethanol degradation; acetate from ethanol: step 2/2. Functionally, elephant shrews, in contrast to other mammals, possess both a lens- and a non-lens specific class-1 aldehyde dehydrogenase. Can convert/oxidize retinaldehyde to retinoic acid. This Macroscelides proboscideus (Short-eared elephant shrew) protein is Aldehyde dehydrogenase, cytosolic 2.